The chain runs to 326 residues: MAVYTDVAADELADFLKAYDIGELLSYKGIAEGVENSNYLLHTTAGSFFLTLYEKRVAVDDLPFFLGLMGHLATHGIVCPQPVKARNGEALGCLAGRPAAIIDFLEGVWPRKPNVTHCAAVGAALAKLHLAGRDFPMRRANALSVSSWRPLFEQATPCIDTVQHGLHDFLKAELDHLERHWPQNLPAGVIHADLFPDNVLFLGDRLSGLIDFYFACNDFFAYDVAICLNAWCFEPDHSFNVTKARALLGAYNRERALSEAEQAALPLLARGAALRFLLTRLVDFLNVPAGALVKPKDPLEYVRKLRFQQSVGNIREYGVAASGLVA.

Belongs to the pseudomonas-type ThrB family.

It catalyses the reaction L-homoserine + ATP = O-phospho-L-homoserine + ADP + H(+). The protein operates within amino-acid biosynthesis; L-threonine biosynthesis; L-threonine from L-aspartate: step 4/5. This is Homoserine kinase from Nitrobacter hamburgensis (strain DSM 10229 / NCIMB 13809 / X14).